Consider the following 213-residue polypeptide: Small ribosomal subunit protein uS3 (213 aa).

The KH type-2 domain maps to 38 to 106 (IREYLENRLS…RVHINIVEIK (69 aa)).

This sequence belongs to the universal ribosomal protein uS3 family. As to quaternary structure, part of the 30S ribosomal subunit. Forms a tight complex with proteins S10 and S14.

In terms of biological role, binds the lower part of the 30S subunit head. Binds mRNA in the 70S ribosome, positioning it for translation. In Oceanobacillus iheyensis (strain DSM 14371 / CIP 107618 / JCM 11309 / KCTC 3954 / HTE831), this protein is Small ribosomal subunit protein uS3.